Consider the following 226-residue polypeptide: Exopolysaccharide production protein ExoY (226 aa).

A helical membrane pass occupies residues 34–54 (VLIAILALIALSPLFLLVMGL).

This sequence belongs to the bacterial sugar transferase family.

It is found in the cell membrane. It functions in the pathway glycan metabolism; exopolysaccharide biosynthesis. Needed for the addition of the first sugar (galactose) to the isoprenoid carrier. May function as a sugar transferase. The sequence is that of Exopolysaccharide production protein ExoY (exoY) from Sinorhizobium fredii (strain NBRC 101917 / NGR234).